A 550-amino-acid chain; its full sequence is Arginine--tRNA ligase (550 aa).

Residues 130–140 (ANPTGPIHLGG) carry the 'HIGH' region motif.

The protein belongs to the class-I aminoacyl-tRNA synthetase family. In terms of assembly, monomer.

The protein resides in the cytoplasm. It carries out the reaction tRNA(Arg) + L-arginine + ATP = L-arginyl-tRNA(Arg) + AMP + diphosphate. The protein is Arginine--tRNA ligase of Rhodococcus erythropolis (strain PR4 / NBRC 100887).